A 312-amino-acid chain; its full sequence is Pseudouridine-5'-phosphate glycosidase (312 aa).

Glutamate 31 (proton donor) is an active-site residue. The substrate site is built by lysine 93 and valine 113. Aspartate 145 contacts Mn(2+). 147–149 (SAD) lines the substrate pocket. Lysine 166 functions as the Nucleophile in the catalytic mechanism.

It belongs to the pseudouridine-5'-phosphate glycosidase family. Homotrimer. The cofactor is Mn(2+). Requires Fe(2+) as cofactor. Co(2+) serves as cofactor.

The catalysed reaction is D-ribose 5-phosphate + uracil = psi-UMP + H2O. Its activity is regulated as follows. Inhibited by Zn(2+) and Ni(2+). Its function is as follows. Catalyzes the reversible cleavage of pseudouridine 5'-phosphate (PsiMP) to ribose 5-phosphate and uracil. Functions biologically in the cleavage direction, as part of a pseudouridine degradation pathway. This chain is Pseudouridine-5'-phosphate glycosidase, found in Escherichia coli (strain K12).